Here is a 477-residue protein sequence, read N- to C-terminus: Ribulose bisphosphate carboxylase large chain (477 aa).

Residues 1-2 (MS) constitute a propeptide that is removed on maturation. Proline 3 carries the post-translational modification N-acetylproline. At lysine 14 the chain carries N6,N6,N6-trimethyllysine. Residues asparagine 123 and threonine 173 each coordinate substrate. The active-site Proton acceptor is the lysine 175. Lysine 177 lines the substrate pocket. Lysine 201, aspartate 203, and glutamate 204 together coordinate Mg(2+). Lysine 201 carries the N6-carboxylysine modification. Catalysis depends on histidine 294, which acts as the Proton acceptor. 3 residues coordinate substrate: arginine 295, histidine 327, and serine 379.

The protein belongs to the RuBisCO large chain family. Type I subfamily. Heterohexadecamer of 8 large chains and 8 small chains; disulfide-linked. The disulfide link is formed within the large subunit homodimers. Requires Mg(2+) as cofactor. In terms of processing, the disulfide bond which can form in the large chain dimeric partners within the hexadecamer appears to be associated with oxidative stress and protein turnover.

The protein resides in the plastid. Its subcellular location is the chloroplast. It catalyses the reaction 2 (2R)-3-phosphoglycerate + 2 H(+) = D-ribulose 1,5-bisphosphate + CO2 + H2O. The catalysed reaction is D-ribulose 1,5-bisphosphate + O2 = 2-phosphoglycolate + (2R)-3-phosphoglycerate + 2 H(+). Its function is as follows. RuBisCO catalyzes two reactions: the carboxylation of D-ribulose 1,5-bisphosphate, the primary event in carbon dioxide fixation, as well as the oxidative fragmentation of the pentose substrate in the photorespiration process. Both reactions occur simultaneously and in competition at the same active site. The chain is Ribulose bisphosphate carboxylase large chain (rbcL) from Solanum tuberosum (Potato).